The sequence spans 285 residues: Bifunctional protein FolD (285 aa).

Residues 166-168 (GAS) and Ile-232 each bind NADP(+).

This sequence belongs to the tetrahydrofolate dehydrogenase/cyclohydrolase family. As to quaternary structure, homodimer.

The enzyme catalyses (6R)-5,10-methylene-5,6,7,8-tetrahydrofolate + NADP(+) = (6R)-5,10-methenyltetrahydrofolate + NADPH. It catalyses the reaction (6R)-5,10-methenyltetrahydrofolate + H2O = (6R)-10-formyltetrahydrofolate + H(+). Its pathway is one-carbon metabolism; tetrahydrofolate interconversion. Its function is as follows. Catalyzes the oxidation of 5,10-methylenetetrahydrofolate to 5,10-methenyltetrahydrofolate and then the hydrolysis of 5,10-methenyltetrahydrofolate to 10-formyltetrahydrofolate. This Vibrio vulnificus (strain CMCP6) protein is Bifunctional protein FolD.